The primary structure comprises 341 residues: Basic membrane protein B (341 aa).

The N-terminal stretch at 1–14 is a signal peptide; sequence MRIVIFIFGILLTS. The N-palmitoyl cysteine moiety is linked to residue Cys15. Cys15 is lipidated: S-diacylglycerol cysteine.

This sequence belongs to the BMP lipoprotein family. Monomer.

Its subcellular location is the cell inner membrane. May be part of an ABC-type nucleoside uptake system involved in the purine salvage pathway. The chain is Basic membrane protein B (bmpB) from Borreliella burgdorferi (strain ATCC 35210 / DSM 4680 / CIP 102532 / B31) (Borrelia burgdorferi).